A 99-amino-acid polypeptide reads, in one-letter code: Putative membrane protein insertion efficiency factor (99 aa).

It belongs to the UPF0161 family.

It is found in the cell inner membrane. Functionally, could be involved in insertion of integral membrane proteins into the membrane. The polypeptide is Putative membrane protein insertion efficiency factor (Salinibacter ruber (strain DSM 13855 / M31)).